The sequence spans 440 residues: Chromosome partition protein MukF (440 aa).

Residues 208–236 (LSETSGTLRELQDTLEAAGDKLQANLLRI) are leucine-zipper.

Belongs to the MukF family. As to quaternary structure, interacts, and probably forms a ternary complex, with MukE and MukB via its C-terminal region. The complex formation is stimulated by calcium or magnesium. It is required for an interaction between MukE and MukB.

The protein resides in the cytoplasm. It is found in the nucleoid. Its function is as follows. Involved in chromosome condensation, segregation and cell cycle progression. May participate in facilitating chromosome segregation by condensation DNA from both sides of a centrally located replisome during cell division. Not required for mini-F plasmid partitioning. Probably acts via its interaction with MukB and MukE. Overexpression results in anucleate cells. It has a calcium binding activity. The sequence is that of Chromosome partition protein MukF from Citrobacter koseri (strain ATCC BAA-895 / CDC 4225-83 / SGSC4696).